We begin with the raw amino-acid sequence, 141 residues long: Nucleoside diphosphate kinase (141 aa).

The ATP site is built by Lys-11, Phe-59, Arg-87, Thr-93, Arg-104, and Asn-114. His-117 serves as the catalytic Pros-phosphohistidine intermediate.

It belongs to the NDK family. Homotetramer. The cofactor is Mg(2+).

It is found in the cytoplasm. The catalysed reaction is a 2'-deoxyribonucleoside 5'-diphosphate + ATP = a 2'-deoxyribonucleoside 5'-triphosphate + ADP. The enzyme catalyses a ribonucleoside 5'-diphosphate + ATP = a ribonucleoside 5'-triphosphate + ADP. Functionally, major role in the synthesis of nucleoside triphosphates other than ATP. The ATP gamma phosphate is transferred to the NDP beta phosphate via a ping-pong mechanism, using a phosphorylated active-site intermediate. This is Nucleoside diphosphate kinase from Polaromonas naphthalenivorans (strain CJ2).